We begin with the raw amino-acid sequence, 134 residues long: MTRPTSSAPSQRMLRIGEQVRAAITQVLQRGEVRDDVIEATVISVSEVRMSPDLKIATAYVTPLGVSDHSIVIEALNRHARFIRGRLGPQLRQMKYMPEVRFRDDTSFDNYKKIDELLRSPEVSRDLDGDNDEQ.

It belongs to the RbfA family. In terms of assembly, monomer. Binds 30S ribosomal subunits, but not 50S ribosomal subunits or 70S ribosomes.

The protein localises to the cytoplasm. Functionally, one of several proteins that assist in the late maturation steps of the functional core of the 30S ribosomal subunit. Associates with free 30S ribosomal subunits (but not with 30S subunits that are part of 70S ribosomes or polysomes). Required for efficient processing of 16S rRNA. May interact with the 5'-terminal helix region of 16S rRNA. This Rhizobium johnstonii (strain DSM 114642 / LMG 32736 / 3841) (Rhizobium leguminosarum bv. viciae) protein is Ribosome-binding factor A.